We begin with the raw amino-acid sequence, 613 residues long: Laccase 1 (613 aa).

A signal peptide spans 1 to 20; that stretch reads MSSSVRLLLIVALLYTNSWA. 3 Plastocyanin-like domains span residues 29 to 142, 171 to 359, and 468 to 598; these read ITWE…IRPK, YLVV…MRVP, and DATC…ILDG. N74 carries N-linked (GlcNAc...) asparagine glycosylation. Cu cation is bound by residues H78, H80, H122, and H124. N256, N279, and N484 each carry an N-linked (GlcNAc...) asparagine glycan. Positions 506, 509, and 511 each coordinate Cu cation. The N-linked (GlcNAc...) asparagine glycan is linked to N526. Residues H580, C581, H582, and H586 each coordinate Cu cation.

This sequence belongs to the multicopper oxidase family. Cu cation serves as cofactor.

The protein localises to the cell surface. The protein operates within pigment biosynthesis. Functionally, laccase; part of the Pks1 gene cluster that mediates the biosynthesis of an anthraquinone derivative pigment that contributes to conidial pigmentation that provides protection from UV radiation, heat and cold stress. The polyketide synthase Pks1 produces 1-acetyl-2,4,6,8-tetrahydroxy-9,10-anthraquinone though condensation of acetyl-CoA with malonyl-CoA. The dehydratase EthD and the laccase Mlac1 further convert the anthraquinone derivative into the final conidial pigment. In Metarhizium acridum (strain CQMa 102), this protein is Laccase 1.